The following is a 986-amino-acid chain: Zinc finger protein 445 (986 aa).

The SCAN box domain occupies 52–134 (RQLFRQLRYH…ALLEELQRDL (83 aa)). A KRAB domain is found at 219-289 (LTFQDVEVTF…NICTVQLKRD (71 aa)). Glycyl lysine isopeptide (Lys-Gly) (interchain with G-Cter in SUMO2) cross-links involve residues K302, K360, and K385. A disordered region spans residues 433–460 (QNTGLKENGKDRYGETSRKSWHAHPEHR). Residues 439–460 (ENGKDRYGETSRKSWHAHPEHR) show a composition bias toward basic and acidic residues. 2 consecutive C2H2-type zinc fingers follow at residues 470–492 (FQCR…EKIH) and 498–520 (YQCS…QKTH). A Glycyl lysine isopeptide (Lys-Gly) (interchain with G-Cter in SUMO2) cross-link involves residue K524. 2 C2H2-type zinc fingers span residues 553–575 (LHCN…QRIH) and 581–604 (YKCT…KLHH). Residue K609 forms a Glycyl lysine isopeptide (Lys-Gly) (interchain with G-Cter in SUMO2) linkage. 2 consecutive C2H2-type zinc fingers follow at residues 634 to 656 (FPCQ…QRIH) and 662 to 686 (YQCS…RTQH). Residue K691 forms a Glycyl lysine isopeptide (Lys-Gly) (interchain with G-Cter in SUMO2) linkage. 4 consecutive C2H2-type zinc fingers follow at residues 718–740 (NKCK…ERVH), 746–768 (YQCR…QRKH), 796–818 (FWCQ…KGIH), and 824–846 (FKCN…QRIH). K929 participates in a covalent cross-link: Glycyl lysine isopeptide (Lys-Gly) (interchain with G-Cter in SUMO2). C2H2-type zinc fingers lie at residues 933–955 (HKCS…KRCH) and 961–983 (FKCI…MKNH).

It belongs to the krueppel C2H2-type zinc-finger protein family.

It is found in the nucleus. Its function is as follows. Transcription regulator required to maintain maternal and paternal gene imprinting, a process by which gene expression is restricted in a parent of origin-specific manner by epigenetic modification of genomic DNA and chromatin, including DNA methylation. Acts by controlling DNA methylation during the earliest multicellular stages of development at multiple imprinting control regions (ICRs). Acts together with ZFP57, but ZFP57 plays the predominant role in imprinting maintenance. In contrast, ZNF445 seems to be the major factor in human early embryonic imprinting maintenance. In Mus musculus (Mouse), this protein is Zinc finger protein 445 (Znf445).